A 419-amino-acid polypeptide reads, in one-letter code: Enolase (419 aa).

Gln-161 is a binding site for (2R)-2-phosphoglycerate. Glu-205 serves as the catalytic Proton donor. The Mg(2+) site is built by Asp-240, Glu-283, and Asp-309. (2R)-2-phosphoglycerate is bound by residues Lys-334, Arg-363, Ser-364, and Lys-385. Lys-334 serves as the catalytic Proton acceptor.

The protein belongs to the enolase family. Requires Mg(2+) as cofactor.

Its subcellular location is the cytoplasm. The protein localises to the secreted. It localises to the cell surface. It catalyses the reaction (2R)-2-phosphoglycerate = phosphoenolpyruvate + H2O. It functions in the pathway carbohydrate degradation; glycolysis; pyruvate from D-glyceraldehyde 3-phosphate: step 4/5. Catalyzes the reversible conversion of 2-phosphoglycerate (2-PG) into phosphoenolpyruvate (PEP). It is essential for the degradation of carbohydrates via glycolysis. The chain is Enolase from Saccharolobus solfataricus (strain ATCC 35092 / DSM 1617 / JCM 11322 / P2) (Sulfolobus solfataricus).